The sequence spans 115 residues: Ribosomal protein uS4-like (115 aa).

Belongs to the universal ribosomal protein uS4 family.

This is Ribosomal protein uS4-like from Azoarcus sp. (strain BH72).